A 156-amino-acid polypeptide reads, in one-letter code: Small ribosomal subunit protein uS7 (156 aa).

The protein belongs to the universal ribosomal protein uS7 family. As to quaternary structure, part of the 30S ribosomal subunit. Contacts proteins S9 and S11.

In terms of biological role, one of the primary rRNA binding proteins, it binds directly to 16S rRNA where it nucleates assembly of the head domain of the 30S subunit. Is located at the subunit interface close to the decoding center, probably blocks exit of the E-site tRNA. The sequence is that of Small ribosomal subunit protein uS7 from Gloeothece citriformis (strain PCC 7424) (Cyanothece sp. (strain PCC 7424)).